A 156-amino-acid chain; its full sequence is Small ribosomal subunit protein uS7 (156 aa).

It belongs to the universal ribosomal protein uS7 family. As to quaternary structure, part of the 30S ribosomal subunit. Contacts proteins S9 and S11.

Functionally, one of the primary rRNA binding proteins, it binds directly to 16S rRNA where it nucleates assembly of the head domain of the 30S subunit. Is located at the subunit interface close to the decoding center, probably blocks exit of the E-site tRNA. This chain is Small ribosomal subunit protein uS7, found in Thermomicrobium roseum (strain ATCC 27502 / DSM 5159 / P-2).